The chain runs to 110 residues: DNA-directed RNA polymerase subunit omega (110 aa).

The protein belongs to the RNA polymerase subunit omega family. As to quaternary structure, the RNAP catalytic core consists of 2 alpha, 1 beta, 1 beta' and 1 omega subunit. When a sigma factor is associated with the core the holoenzyme is formed, which can initiate transcription.

It carries out the reaction RNA(n) + a ribonucleoside 5'-triphosphate = RNA(n+1) + diphosphate. Promotes RNA polymerase assembly. Latches the N- and C-terminal regions of the beta' subunit thereby facilitating its interaction with the beta and alpha subunits. The protein is DNA-directed RNA polymerase subunit omega of Vesicomyosocius okutanii subsp. Calyptogena okutanii (strain HA).